The chain runs to 335 residues: Syntaxin-18 (335 aa).

The Cytoplasmic segment spans residues 1-309 (MAVDITLLFR…EDIREAIKNN (309 aa)). Basic and acidic residues-rich tracts occupy residues 168–182 (KLEP…ESTS) and 192–208 (KDSE…EKIL). The tract at residues 168-226 (KLEPEPNTKTRESTSSEKVSQSPSKDSEENPATEERPEKILAETQPELGTWGDGKGEDE) is disordered. The 63-residue stretch at 243-305 (IGEMNSLFDE…KEGNEDIREA (63 aa)) folds into the t-SNARE coiled-coil homology domain. The helical; Anchor for type IV membrane protein transmembrane segment at 310–330 (AGFRVWILFFLVMCSFSLLFL) threads the bilayer. The Vesicular segment spans residues 331–335 (DWYDS).

It belongs to the syntaxin family. In terms of assembly, component of a SNARE complex consisting of STX18, USE1L, BNIP1/SEC20L, and SEC22B. RINT1/TIP20L and ZW10 are associated with the complex through interaction with BNIP1/SEC20L. Interacts directly with USE1L and BNIP1/SEC20L. In terms of tissue distribution, ubiquitous.

It localises to the endoplasmic reticulum membrane. Its subcellular location is the golgi apparatus membrane. Its function is as follows. Syntaxin that may be involved in targeting and fusion of Golgi-derived retrograde transport vesicles with the ER. This Homo sapiens (Human) protein is Syntaxin-18 (STX18).